We begin with the raw amino-acid sequence, 239 residues long: tRNA (guanine-N(7)-)-methyltransferase (239 aa).

S-adenosyl-L-methionine-binding residues include glutamate 69, glutamate 94, aspartate 121, and aspartate 144. Aspartate 144 is an active-site residue. Residues lysine 148, aspartate 180, and threonine 217–glutamate 220 each bind substrate.

It belongs to the class I-like SAM-binding methyltransferase superfamily. TrmB family. Monomer.

It carries out the reaction guanosine(46) in tRNA + S-adenosyl-L-methionine = N(7)-methylguanosine(46) in tRNA + S-adenosyl-L-homocysteine. It participates in tRNA modification; N(7)-methylguanine-tRNA biosynthesis. Its function is as follows. Catalyzes the formation of N(7)-methylguanine at position 46 (m7G46) in tRNA. The protein is tRNA (guanine-N(7)-)-methyltransferase of Buchnera aphidicola subsp. Acyrthosiphon pisum (strain Tuc7).